Here is a 110-residue protein sequence, read N- to C-terminus: UPF0122 protein STER_0914 (110 aa).

The protein belongs to the UPF0122 family.

Might take part in the signal recognition particle (SRP) pathway. This is inferred from the conservation of its genetic proximity to ftsY/ffh. May be a regulatory protein. In Streptococcus thermophilus (strain ATCC BAA-491 / LMD-9), this protein is UPF0122 protein STER_0914.